Consider the following 231-residue polypeptide: Cytochrome c oxidase subunit 2 (231 aa).

The Mitochondrial intermembrane segment spans residues 1 to 30; it reads MNNFFQGYNLLFQHSLFASYMDWFHAFNCS. Residues 31–51 form a helical membrane-spanning segment; it reads LLLGVLVFVTLLFGYLIFSTF. Residues 52-64 lie on the Mitochondrial matrix side of the membrane; sequence YFKSKKIEYQFGE. A helical transmembrane segment spans residues 65–85; the sequence is LLCSIFPTIILLMQMVPSLSL. Residues 86–231 lie on the Mitochondrial intermembrane side of the membrane; it reads LYYYGLMNLD…FKSWCFGTME (146 aa). His-164, Cys-199, Glu-201, Cys-203, His-207, and Met-210 together coordinate Cu cation. Glu-201 serves as a coordination point for Mg(2+).

The protein belongs to the cytochrome c oxidase subunit 2 family. Component of the cytochrome c oxidase (complex IV, CIV), a multisubunit enzyme composed of a catalytic core of 3 subunits and several supernumerary subunits. The complex exists as a monomer or a dimer and forms supercomplexes (SCs) in the inner mitochondrial membrane with ubiquinol-cytochrome c oxidoreductase (cytochrome b-c1 complex, complex III, CIII). Cu cation is required as a cofactor.

The protein localises to the mitochondrion inner membrane. The catalysed reaction is 4 Fe(II)-[cytochrome c] + O2 + 8 H(+)(in) = 4 Fe(III)-[cytochrome c] + 2 H2O + 4 H(+)(out). Functionally, component of the cytochrome c oxidase, the last enzyme in the mitochondrial electron transport chain which drives oxidative phosphorylation. The respiratory chain contains 3 multisubunit complexes succinate dehydrogenase (complex II, CII), ubiquinol-cytochrome c oxidoreductase (cytochrome b-c1 complex, complex III, CIII) and cytochrome c oxidase (complex IV, CIV), that cooperate to transfer electrons derived from NADH and succinate to molecular oxygen, creating an electrochemical gradient over the inner membrane that drives transmembrane transport and the ATP synthase. Cytochrome c oxidase is the component of the respiratory chain that catalyzes the reduction of oxygen to water. Electrons originating from reduced cytochrome c in the intermembrane space (IMS) are transferred via the dinuclear copper A center (CU(A)) of subunit 2 and heme A of subunit 1 to the active site in subunit 1, a binuclear center (BNC) formed by heme A3 and copper B (CU(B)). The BNC reduces molecular oxygen to 2 water molecules using 4 electrons from cytochrome c in the IMS and 4 protons from the mitochondrial matrix. The sequence is that of Cytochrome c oxidase subunit 2 (cox-2) from Caenorhabditis briggsae.